The following is a 251-amino-acid chain: Hydroxyacylglutathione hydrolase (251 aa).

The Zn(2+) site is built by His-53, His-55, Asp-57, His-58, His-110, Asp-127, and His-165.

It belongs to the metallo-beta-lactamase superfamily. Glyoxalase II family. In terms of assembly, monomer. Zn(2+) serves as cofactor.

It catalyses the reaction an S-(2-hydroxyacyl)glutathione + H2O = a 2-hydroxy carboxylate + glutathione + H(+). Its pathway is secondary metabolite metabolism; methylglyoxal degradation; (R)-lactate from methylglyoxal: step 2/2. In terms of biological role, thiolesterase that catalyzes the hydrolysis of S-D-lactoyl-glutathione to form glutathione and D-lactic acid. This is Hydroxyacylglutathione hydrolase from Yersinia pestis.